The sequence spans 291 residues: 2-C-methyl-D-erythritol 4-phosphate cytidylyltransferase (291 aa).

Residues 1–23 (MTERDFDTPVETPTVQPAPAQGA) are disordered.

It belongs to the IspD/TarI cytidylyltransferase family. IspD subfamily.

The enzyme catalyses 2-C-methyl-D-erythritol 4-phosphate + CTP + H(+) = 4-CDP-2-C-methyl-D-erythritol + diphosphate. The protein operates within isoprenoid biosynthesis; isopentenyl diphosphate biosynthesis via DXP pathway; isopentenyl diphosphate from 1-deoxy-D-xylulose 5-phosphate: step 2/6. Its function is as follows. Catalyzes the formation of 4-diphosphocytidyl-2-C-methyl-D-erythritol from CTP and 2-C-methyl-D-erythritol 4-phosphate (MEP). This chain is 2-C-methyl-D-erythritol 4-phosphate cytidylyltransferase, found in Bifidobacterium longum (strain DJO10A).